The chain runs to 243 residues: Vesicle-associated membrane protein-associated protein B/C (243 aa).

A2 bears the N-acetylalanine mark. Residues A2–T222 lie on the Cytoplasmic side of the membrane. Residues V7 to E124 form the MSP domain. S146 carries the phosphoserine modification. Residue K147 forms a Glycyl lysine isopeptide (Lys-Gly) (interchain with G-Cter in SUMO1) linkage. T150 bears the Phosphothreonine mark. Phosphoserine occurs at positions 156, 158, 159, 160, and 206. Positions S159–L196 form a coiled coil. Residues R223–L243 form a helical; Anchor for type IV membrane protein membrane-spanning segment.

The protein belongs to the VAMP-associated protein (VAP) (TC 9.B.17) family. Homodimer, and heterodimer with VAPA. Interacts with VAMP1 and VAMP2. Interacts (via MSP domain) with ZFYVE27. Interacts with RMDN3. Interacts with KIF5A in a ZFYVE27-dependent manner. Interacts (via MSP domain) with STARD3 (via phospho-FFAT motif). Interacts with STARD3NL (via FFAT motif). Interacts with CERT1. Interacts with PLEKHA3 and SACM1L to form a ternary complex. Interacts with VPS13A (via FFAT motif). Interacts with RB1CC1 (via phosphorylated FFAT motif), MIGA2 (via phosphorylated FFAT motif), RMDN3 (via phosphorylated FFAT motif), OSBPL1A (via FFAT motif), KCNB1 (via phosphorylated FFAT motif) and KCNB2 (via phosphorylated FFAT motif). Interacts (via MSP domain) with WDR44 (via FFAT motif); the interactions connect the endoplasmic reticulum (ER) with the endosomal tubule. As to quaternary structure, (Microbial infection) Interacts (via MSP domain) with hepatitis C virus (HCV) non-structural protein 5A (via disordered domain D3). Interacts with HCV RNA-directed RNA polymerase. Ubiquitous. Isoform 1 predominates.

The protein resides in the endoplasmic reticulum membrane. Endoplasmic reticulum (ER)-anchored protein that mediates the formation of contact sites between the ER and endosomes via interaction with FFAT motif-containing proteins such as STARD3 or WDR44. Interacts with STARD3 in a FFAT motif phosphorylation dependent manner. Via interaction with WDR44 participates in neosynthesized protein export. Participates in the endoplasmic reticulum unfolded protein response (UPR) by inducing ERN1/IRE1 activity. Involved in cellular calcium homeostasis regulation. In Homo sapiens (Human), this protein is Vesicle-associated membrane protein-associated protein B/C.